The primary structure comprises 130 residues: Small ribosomal subunit protein uS9 (130 aa).

It belongs to the universal ribosomal protein uS9 family.

The chain is Small ribosomal subunit protein uS9 from Pseudomonas entomophila (strain L48).